A 314-amino-acid polypeptide reads, in one-letter code: MPIKLDNKLPALDVLRSKNVFIMDENRASSQDIRPMEVLILNLMPTKEVTETQLLRLLANTPLQINVEFLYMASHKSKNTHAEHMETFYKTFDEIKDKYYDGLIVTGAPVEQMPFEEVDYWQELTRVFDWSKNHVYSTLHLCWGAQAGLYYKHEVDKVPLSEKLSGIYKQTVDMPENFLMNGFDDSFVSPHSRYTEVTLEDIKNKTDLDVVASGQEVGLSILASKDLREVYSFGHFEYDRDTLAREYRRDLEVGINPDVPANYFPGDDPSQEPKLRWNLAASTFFSNWINYAVYQETPYRLEELEDDFSFYGYL.

Cys142 (acyl-thioester intermediate) is an active-site residue. Substrate is bound by residues Lys163 and Ser192. His235 acts as the Proton acceptor in catalysis. The active site involves Glu237. Position 249 (Arg249) interacts with substrate.

Belongs to the MetA family.

The protein localises to the cytoplasm. It carries out the reaction L-homoserine + acetyl-CoA = O-acetyl-L-homoserine + CoA. It participates in amino-acid biosynthesis; L-methionine biosynthesis via de novo pathway; O-acetyl-L-homoserine from L-homoserine: step 1/1. Functionally, transfers an acetyl group from acetyl-CoA to L-homoserine, forming acetyl-L-homoserine. This Streptococcus thermophilus (strain ATCC BAA-250 / LMG 18311) protein is Homoserine O-acetyltransferase.